Reading from the N-terminus, the 290-residue chain is RWD domain-containing protein 2B (290 aa).

The region spanning 12-136 (SELDLLASMF…EWVKEHAFDY (125 aa)) is the RWD domain.

In Mus musculus (Mouse), this protein is RWD domain-containing protein 2B (Rwdd2b).